Consider the following 337-residue polypeptide: Quercetin 2,3-dioxygenase (337 aa).

Cupin type-2 domains are found at residues 55-110 (KGDA…MQSH) and 226-281 (PKGD…RLDS). Fe cation is bound by residues His-62, His-64, Glu-69, His-103, His-234, His-236, Glu-241, and His-275.

As to quaternary structure, homodimer. Fe(2+) serves as cofactor.

It catalyses the reaction quercetin + O2 = 2-(3,4-dihydroxybenzoyloxy)-4,6-dihydroxybenzoate + CO. It functions in the pathway flavonoid metabolism; quercetin degradation. Performs the first step in the degradation of the flavonoid quercetin by a dioxygenase reaction. The enzyme catalyzes the cleavage of the O-heteroaromatic ring of the flavonol quercetin yielding the depside 2-protocatechuoyl-phloroglucinol carboxylic acid and carbon monoxide. This involves the remarkable dioxygenolytic cleavage of two carbon-carbon bonds. The chain is Quercetin 2,3-dioxygenase (qdoI) from Bacillus subtilis (strain 168).